Consider the following 368-residue polypeptide: MRAEIENYVKKIEQSLELLWRSLDVESSTERLNELEELTSDPSLWNDQANAQTLLREKSNLEEKLNAFNKLKSNLKDTLELEEMAEAENDLETLSQIEQDLKNLSVIAAKFETECLFSGEADGNNCFLEINAGAGGTESHDWVSIMMRMYLRFAERLGFKTEIINMINGEEAGIKSCTIRIIGKRAYGWFKTEAGVHRLVRISPFNAAGKRMTSFASSWVYPEIDDNIAITIEDKDLRIDTFRASGAGGQHVNTTDSAVRITHIPTNTVTQCQSDRSQHKNKAQAMKMLQAKLYELEMQKRTDSVNEQNAAKTDNSWGHQIRSYVLQPYQMVKDLRTDYETSDTKGVLDGDLEDFVSASLAMNAGGRR.

Glutamine 250 bears the N5-methylglutamine mark.

This sequence belongs to the prokaryotic/mitochondrial release factor family. Methylated by PrmC. Methylation increases the termination efficiency of RF2.

Its subcellular location is the cytoplasm. Peptide chain release factor 2 directs the termination of translation in response to the peptide chain termination codons UGA and UAA. This chain is Peptide chain release factor 2, found in Rickettsia felis (strain ATCC VR-1525 / URRWXCal2) (Rickettsia azadi).